The sequence spans 488 residues: MIQGTTSDAGKSTLVAGLCRLARRAGARVAPFKPQNMALNSAVTADGGEIGRAQALQALAAGVAPHTDFNPVLLKPTSDRGAQVIIHGAARMNLDARAYHDYKPVAFDAVLESYARLRAGYDTVIVEGAGSPAEINLRDGDIANMGFAERVDCPVVLVADIDRGGVFAHLVGTLACLSDSERARVRGFVINRFRGDIGLLEPGLDWLRAQTGKPVFGVLPYLHGLLLDAEDMLPRQARSAATRDGAGVLRVVVPALPRISNHTDFDPLRAHPQVEFTYWKSGPVPAADLLILPGSKSVQRDLQWLRDAGWDTVIRRHLRYGGKVIGICGGMQMLGRTLDDPLGLEGAPGSVPGLGLFDFDTTLLPHKTLKNVTGQLALPGAPAVRGYEIHMGDTRGPALAAPALQLAADDAAGGSRADGALSADGQLLATYVHGLFDTPAACAALLAWAGLDGGERIDYPALREASIERLADSFAEHLDLRALYAEFR.

The GATase cobBQ-type domain maps to 248-441 (VLRVVVPALP…VHGLFDTPAA (194 aa)). The active-site Nucleophile is cysteine 328. Histidine 433 is a catalytic residue.

It belongs to the CobB/CobQ family. CobQ subfamily.

The protein operates within cofactor biosynthesis; adenosylcobalamin biosynthesis. In terms of biological role, catalyzes amidations at positions B, D, E, and G on adenosylcobyrinic A,C-diamide. NH(2) groups are provided by glutamine, and one molecule of ATP is hydrogenolyzed for each amidation. The polypeptide is Cobyric acid synthase (Burkholderia vietnamiensis (strain G4 / LMG 22486) (Burkholderia cepacia (strain R1808))).